Reading from the N-terminus, the 490-residue chain is Beta-N-acetyl-D-glucosaminide beta-1,4-N-acetylglucosaminyl-transferase (490 aa).

Residues 1–30 (MYLVVCWGRVTGNMISTRHCFSRCKSRSVR) lie on the Cytoplasmic side of the membrane. A helical; Signal-anchor for type II membrane protein membrane pass occupies residues 31-50 (VIKATAMLFVAAMLFLALHM). Asparagine 51, asparagine 82, asparagine 441, asparagine 459, and asparagine 485 each carry an N-linked (GlcNAc...) asparagine glycan. The Lumenal segment spans residues 51–490 (NFSHEASQQN…YLTGNFTIIS (440 aa)).

Belongs to the glycosyltransferase 7 family.

Its subcellular location is the golgi apparatus membrane. It catalyses the reaction an N-acetyl-beta-D-glucosaminyl derivative + UDP-N-acetyl-alpha-D-glucosamine = an N-acetyl-beta-D-glucosaminyl-(1-&gt;4)-N-acetyl-beta-D-glucosaminyl derivative + UDP + H(+). It participates in protein modification; protein glycosylation. This chain is Beta-N-acetyl-D-glucosaminide beta-1,4-N-acetylglucosaminyl-transferase (GNT), found in Lymnaea stagnalis (Great pond snail).